Consider the following 636-residue polypeptide: Probable potassium transport system protein Kup (636 aa).

12 consecutive transmembrane segments (helical) span residues 22–42 (LGLL…SPLY), 64–84 (ILSL…VMFI), 115–135 (LMVI…MITP), 150–170 (FDGI…ALFL), 182–202 (LFGP…VHGI), 220–240 (FFVV…LALT), 261–281 (WFIL…ALLL), 293–313 (LLAP…ATVI), 351–371 (IYIG…VIGF), 383–403 (VAVT…MLLL), 408–428 (PVLA…FFAA), and 433–453 (IVQG…LMST).

It belongs to the HAK/KUP transporter (TC 2.A.72) family.

It localises to the cell inner membrane. The catalysed reaction is K(+)(in) + H(+)(in) = K(+)(out) + H(+)(out). Transport of potassium into the cell. Likely operates as a K(+):H(+) symporter. This Pseudomonas putida (strain GB-1) protein is Probable potassium transport system protein Kup.